Here is a 550-residue protein sequence, read N- to C-terminus: ATP synthase subunit alpha (550 aa).

172–179 (GDRKTGKT) lines the ATP pocket. A disordered region spans residues 521-550 (EPAAEPLAGEEDRETVTRFHDDATDRPAGS). Residues 534–550 (ETVTRFHDDATDRPAGS) show a composition bias toward basic and acidic residues.

This sequence belongs to the ATPase alpha/beta chains family. In terms of assembly, F-type ATPases have 2 components, CF(1) - the catalytic core - and CF(0) - the membrane proton channel. CF(1) has five subunits: alpha(3), beta(3), gamma(1), delta(1), epsilon(1). CF(0) has three main subunits: a(1), b(2) and c(9-12). The alpha and beta chains form an alternating ring which encloses part of the gamma chain. CF(1) is attached to CF(0) by a central stalk formed by the gamma and epsilon chains, while a peripheral stalk is formed by the delta and b chains.

Its subcellular location is the cell membrane. The catalysed reaction is ATP + H2O + 4 H(+)(in) = ADP + phosphate + 5 H(+)(out). Its function is as follows. Produces ATP from ADP in the presence of a proton gradient across the membrane. The alpha chain is a regulatory subunit. This is ATP synthase subunit alpha from Salinispora tropica (strain ATCC BAA-916 / DSM 44818 / JCM 13857 / NBRC 105044 / CNB-440).